Here is a 203-residue protein sequence, read N- to C-terminus: Putative zinc finger protein 876 (203 aa).

C2H2-type zinc fingers lie at residues Tyr63 to His85, Tyr91 to His113, Tyr119 to His141, and Tyr147 to His169. The C2H2-type 5; degenerate zinc finger occupies Tyr175–Gln197.

This sequence belongs to the krueppel C2H2-type zinc-finger protein family.

The protein resides in the nucleus. In terms of biological role, may be involved in transcriptional regulation. The chain is Putative zinc finger protein 876 (ZNF876P) from Homo sapiens (Human).